The following is a 360-amino-acid chain: Phospho-N-acetylmuramoyl-pentapeptide-transferase (360 aa).

Helical transmembrane passes span 25–45 (TGGA…WIID), 71–91 (TPTM…VLWA), 94–114 (LNPY…VGFY), 129–148 (SGRT…CYAL), 168–188 (TAIY…VGAG), 199–219 (GLAI…SYLA), 239–259 (LAVL…FNAP), 263–283 (IFMG…IAVA), 288–308 (FVLA…IVQV), and 337–357 (QIVI…LSTL).

Belongs to the glycosyltransferase 4 family. MraY subfamily. Requires Mg(2+) as cofactor.

It localises to the cell inner membrane. It carries out the reaction UDP-N-acetyl-alpha-D-muramoyl-L-alanyl-gamma-D-glutamyl-meso-2,6-diaminopimeloyl-D-alanyl-D-alanine + di-trans,octa-cis-undecaprenyl phosphate = di-trans,octa-cis-undecaprenyl diphospho-N-acetyl-alpha-D-muramoyl-L-alanyl-D-glutamyl-meso-2,6-diaminopimeloyl-D-alanyl-D-alanine + UMP. Its pathway is cell wall biogenesis; peptidoglycan biosynthesis. In terms of biological role, catalyzes the initial step of the lipid cycle reactions in the biosynthesis of the cell wall peptidoglycan: transfers peptidoglycan precursor phospho-MurNAc-pentapeptide from UDP-MurNAc-pentapeptide onto the lipid carrier undecaprenyl phosphate, yielding undecaprenyl-pyrophosphoryl-MurNAc-pentapeptide, known as lipid I. The protein is Phospho-N-acetylmuramoyl-pentapeptide-transferase of Rhodopseudomonas palustris (strain BisA53).